Here is a 460-residue protein sequence, read N- to C-terminus: Cyclin-T1-2 (460 aa).

Disordered stretches follow at residues 1–20 and 285–345; these read MDEA…SSVA and QPIS…QDHS. Basic and acidic residues predominate over residues 314–324; sequence SDDHSVHDGSR. The segment covering 332–345 has biased composition (polar residues); that stretch reads NSESEAQKNLQDHS.

The protein belongs to the cyclin family. Cyclin T subfamily.

This Arabidopsis thaliana (Mouse-ear cress) protein is Cyclin-T1-2 (CYCT1-2).